Reading from the N-terminus, the 985-residue chain is Cation channel sperm-associated auxiliary subunit epsilon (985 aa).

The first 35 residues, 1-35, serve as a signal peptide directing secretion; the sequence is MPSAGQRKPGSLLALQALQKWLLRGGVGAMLARQV. Over 36–937 the chain is Extracellular; that stretch reads VAALLLWLSC…ESLGMIPRSS (902 aa). 4 disulfide bridges follow: cysteine 87/cysteine 101, cysteine 130/cysteine 235, cysteine 275/cysteine 365, and cysteine 439/cysteine 442. Residues asparagine 91, asparagine 143, and asparagine 292 are each glycosylated (N-linked (GlcNAc...) asparagine). N-linked (GlcNAc...) asparagine glycosylation is found at asparagine 502, asparagine 517, and asparagine 565. Intrachain disulfides connect cysteine 617-cysteine 724, cysteine 737-cysteine 919, cysteine 753-cysteine 786, and cysteine 838-cysteine 869. An N-linked (GlcNAc...) asparagine glycan is attached at asparagine 749. N-linked (GlcNAc...) asparagine glycosylation occurs at asparagine 830. N-linked (GlcNAc...) asparagine glycosylation is found at asparagine 888, asparagine 915, and asparagine 920. Residues 938-958 traverse the membrane as a helical segment; that stretch reads VYLVAALIFVLMLTFISILVL. The Cytoplasmic portion of the chain corresponds to 959-985; it reads SYFWYLKIYRQFIIEPLHKRPAKQKKN.

Belongs to the CATSPERD family. Component of the CatSper complex or CatSpermasome composed of the core pore-forming members CATSPER1, CATSPER2, CATSPER3 and CATSPER4 as well as auxiliary members CATSPERB, CATSPERG2, CATSPERD, CATSPERE, CATSPERZ, C2CD6/CATSPERT, SLCO6C1, TMEM249, TMEM262 and EFCAB9. HSPA1 may be an additional auxiliary complex member. The core complex members CATSPER1, CATSPER2, CATSPER3 and CATSPER4 form a heterotetrameric channel. The auxiliary CATSPERB, CATSPERG2, CATSPERD and CATSPERE subunits form a pavilion-like structure over the pore which stabilizes the complex through interactions with CATSPER4, CATSPER3, CATSPER1 and CATSPER2 respectively. SLCO6C1 interacts with CATSPERE and TMEM262/CATSPERH interacts with CATSPERB, further stabilizing the complex. C2CD6/CATSPERT interacts at least with CATSPERD and is required for targeting the CatSper complex in the flagellar membrane. In terms of tissue distribution, testis-specific.

The protein localises to the cell projection. It is found in the cilium. It localises to the flagellum membrane. Auxiliary component of the CatSper complex, a complex involved in sperm cell hyperactivation. Sperm cell hyperactivation is needed for sperm motility which is essential late in the preparation of sperm for fertilization. The chain is Cation channel sperm-associated auxiliary subunit epsilon from Mus musculus (Mouse).